The chain runs to 27 residues: Potassium channel toxin alpha-KTx 9.11 (27 aa).

Disulfide bonds link C3/C19, C6/C23, and C10/C25.

The protein belongs to the short scorpion toxin superfamily. Potassium channel inhibitor family. Alpha-KTx 09 subfamily. As to expression, expressed by the venom gland.

It localises to the secreted. May play a role in blocking voltage-gated potassium channels Kv1.2/KCNA2, Kv1.3/KCNA3 and Kv1.6/KCNA6 to a lesser extent. The sequence is that of Potassium channel toxin alpha-KTx 9.11 from Mesobuthus gibbosus (Mediterranean checkered scorpion).